A 440-amino-acid polypeptide reads, in one-letter code: tRNA (guanine(37)-N(1))-methyltransferase (440 aa).

S-adenosyl-L-methionine is bound by residues histidine 217, 255–256, 283–284, and asparagine 315; these read DL and DG.

Belongs to the class I-like SAM-binding methyltransferase superfamily. TRM5/TYW2 family. In terms of assembly, monomer.

Its subcellular location is the mitochondrion matrix. It is found in the nucleus. The protein resides in the cytoplasm. The catalysed reaction is guanosine(37) in tRNA + S-adenosyl-L-methionine = N(1)-methylguanosine(37) in tRNA + S-adenosyl-L-homocysteine + H(+). Its function is as follows. Specifically methylates the N1 position of guanosine-37 in various cytoplasmic and mitochondrial tRNAs. Methylation is not dependent on the nature of the nucleoside 5' of the target nucleoside. This is the first step in the biosynthesis of wybutosine (yW), a modified base adjacent to the anticodon of tRNAs and required for accurate decoding. In Drosophila pseudoobscura pseudoobscura (Fruit fly), this protein is tRNA (guanine(37)-N(1))-methyltransferase.